The primary structure comprises 151 residues: Deoxyuridine 5'-triphosphate nucleotidohydrolase (151 aa).

Substrate contacts are provided by residues 70–72 (RSG), Asn83, 87–89 (LID), and Met97.

The protein belongs to the dUTPase family. The cofactor is Mg(2+).

The enzyme catalyses dUTP + H2O = dUMP + diphosphate + H(+). The protein operates within pyrimidine metabolism; dUMP biosynthesis; dUMP from dCTP (dUTP route): step 2/2. Its function is as follows. This enzyme is involved in nucleotide metabolism: it produces dUMP, the immediate precursor of thymidine nucleotides and it decreases the intracellular concentration of dUTP so that uracil cannot be incorporated into DNA. The protein is Deoxyuridine 5'-triphosphate nucleotidohydrolase of Psychromonas ingrahamii (strain DSM 17664 / CCUG 51855 / 37).